A 283-amino-acid chain; its full sequence is Probable aquaporin NIP4-2 (283 aa).

An N-acetylmethionine modification is found at methionine 1. Over residues 1 to 21 (MTSHGEEIEDEQISRIEKGNC) the composition is skewed to basic and acidic residues. The segment at 1-23 (MTSHGEEIEDEQISRIEKGNCKD) is disordered. 2 helical membrane passes run 51–71 (GTYF…LYGG) and 77–97 (GICV…GHIS). Positions 102-104 (NPA) match the NPA 1 motif. The next 3 helical transmembrane spans lie at 120–140 (VPLY…TLRL), 161–181 (ALVA…GVAT), and 189–209 (LAGI…GPIS). Positions 214–216 (NPA) match the NPA 2 motif. A helical transmembrane segment spans residues 231–251 (IWVYIVGPFVGIFAGGFVYNF). Serine 267 bears the Phosphoserine mark.

Belongs to the MIP/aquaporin (TC 1.A.8) family. NIP (TC 1.A.8.12) subfamily.

The protein resides in the membrane. Functionally, aquaporins facilitate the transport of water and small neutral solutes across cell membranes. The chain is Probable aquaporin NIP4-2 (NIP4-2) from Arabidopsis thaliana (Mouse-ear cress).